The chain runs to 211 residues: ATP-dependent Clp protease proteolytic subunit (211 aa).

The active-site Nucleophile is Ser-114. His-139 is an active-site residue.

Belongs to the peptidase S14 family. Fourteen ClpP subunits assemble into 2 heptameric rings which stack back to back to give a disk-like structure with a central cavity, resembling the structure of eukaryotic proteasomes.

It localises to the cytoplasm. It carries out the reaction Hydrolysis of proteins to small peptides in the presence of ATP and magnesium. alpha-casein is the usual test substrate. In the absence of ATP, only oligopeptides shorter than five residues are hydrolyzed (such as succinyl-Leu-Tyr-|-NHMec, and Leu-Tyr-Leu-|-Tyr-Trp, in which cleavage of the -Tyr-|-Leu- and -Tyr-|-Trp bonds also occurs).. In terms of biological role, cleaves peptides in various proteins in a process that requires ATP hydrolysis. Has a chymotrypsin-like activity. Plays a major role in the degradation of misfolded proteins. This Pseudomonas fluorescens (strain SBW25) protein is ATP-dependent Clp protease proteolytic subunit.